The chain runs to 241 residues: Orotidine 5'-phosphate decarboxylase (241 aa).

Residues D19, K41, 69 to 78 (DLKFFDIPAT), T124, R185, Q194, G214, and R215 contribute to the substrate site. K71 acts as the Proton donor in catalysis.

This sequence belongs to the OMP decarboxylase family. Type 1 subfamily. As to quaternary structure, homodimer.

The enzyme catalyses orotidine 5'-phosphate + H(+) = UMP + CO2. It functions in the pathway pyrimidine metabolism; UMP biosynthesis via de novo pathway; UMP from orotate: step 2/2. Its function is as follows. Catalyzes the decarboxylation of orotidine 5'-monophosphate (OMP) to uridine 5'-monophosphate (UMP). The sequence is that of Orotidine 5'-phosphate decarboxylase from Stenotrophomonas maltophilia (strain K279a).